The primary structure comprises 399 residues: Elongation factor Tu (399 aa).

The tr-type G domain occupies 10 to 204 (KPHVNIGTIG…AVDASIPEPE (195 aa)). The G1 stretch occupies residues 19 to 26 (GHVDHGKT). 19-26 (GHVDHGKT) is a binding site for GTP. Position 26 (Thr-26) interacts with Mg(2+). The G2 stretch occupies residues 60–64 (GITIN). The interval 81 to 84 (DCPG) is G3. Residues 81–85 (DCPGH) and 136–139 (NKCD) each bind GTP. The interval 136-139 (NKCD) is G4. Residues 174 to 176 (SGL) form a G5 region.

It belongs to the TRAFAC class translation factor GTPase superfamily. Classic translation factor GTPase family. EF-Tu/EF-1A subfamily. As to quaternary structure, monomer.

It is found in the cytoplasm. It carries out the reaction GTP + H2O = GDP + phosphate + H(+). GTP hydrolase that promotes the GTP-dependent binding of aminoacyl-tRNA to the A-site of ribosomes during protein biosynthesis. The sequence is that of Elongation factor Tu from Prochlorococcus marinus (strain MIT 9313).